Here is a 237-residue protein sequence, read N- to C-terminus: Carboxy-S-adenosyl-L-methionine synthase (237 aa).

Residues Y36, 61–63 (GAS), 86–87 (DN), 112–113 (DI), N127, and R194 contribute to the S-adenosyl-L-methionine site.

The protein belongs to the class I-like SAM-binding methyltransferase superfamily. Cx-SAM synthase family. In terms of assembly, homodimer.

The catalysed reaction is prephenate + S-adenosyl-L-methionine = carboxy-S-adenosyl-L-methionine + 3-phenylpyruvate + H2O. Its function is as follows. Catalyzes the conversion of S-adenosyl-L-methionine (SAM) to carboxy-S-adenosyl-L-methionine (Cx-SAM). The polypeptide is Carboxy-S-adenosyl-L-methionine synthase (Ruthia magnifica subsp. Calyptogena magnifica).